The chain runs to 172 residues: Pre-intermoult gene 1 protein (172 aa).

An N-terminal signal peptide occupies residues 1 to 22 (MKLTKLWLLFVCLGLFVTLVVS). Positions 25-45 (TDSDADSDSSADSDSSADSDE) are enriched in acidic residues. Residues 25 to 172 (TDSDADSDSS…RRNNNSRRRG (148 aa)) are disordered. 3 tandem repeats follow at residues 27–32 (SDADSD), 33–38 (SSADSD), and 39–44 (SSADSD). A 3 X 6 AA tandem repeats of S-S-A-D-S-D region spans residues 27–44 (SDADSDSSADSDSSADSD). Positions 55-77 (TSTTESSATNSSGSSDDASGSSS) are enriched in low complexity. A compositionally biased stretch (acidic residues) spans 78-95 (DVDDGSDDDTDSGSDTDY). Over residues 104 to 172 (VKKRANRKKA…RRNNNSRRRG (69 aa)) the composition is skewed to basic residues.

In terms of tissue distribution, low expression in first to third instar larvae salivary glands.

In Drosophila melanogaster (Fruit fly), this protein is Pre-intermoult gene 1 protein (Pig1).